The following is a 444-amino-acid chain: Cobyrinate a,c-diamide synthase (444 aa).

Residues 250–438 (IIAIAQDRAF…PHIHFFGSYK (189 aa)) enclose the GATase cobBQ-type domain. Cys332 functions as the Nucleophile in the catalytic mechanism.

This sequence belongs to the CobB/CbiA family. Mg(2+) is required as a cofactor.

It catalyses the reaction cob(II)yrinate + 2 L-glutamine + 2 ATP + 2 H2O = cob(II)yrinate a,c diamide + 2 L-glutamate + 2 ADP + 2 phosphate + 2 H(+). Its pathway is cofactor biosynthesis; adenosylcobalamin biosynthesis; cob(II)yrinate a,c-diamide from sirohydrochlorin (anaerobic route): step 10/10. Its function is as follows. Catalyzes the ATP-dependent amidation of the two carboxylate groups at positions a and c of cobyrinate, using either L-glutamine or ammonia as the nitrogen source. This chain is Cobyrinate a,c-diamide synthase, found in Fusobacterium nucleatum subsp. nucleatum (strain ATCC 25586 / DSM 15643 / BCRC 10681 / CIP 101130 / JCM 8532 / KCTC 2640 / LMG 13131 / VPI 4355).